Here is a 155-residue protein sequence, read N- to C-terminus: Small ribosomal subunit protein uS7cz/uS7cy (155 aa).

The protein belongs to the universal ribosomal protein uS7 family. As to quaternary structure, part of the 30S ribosomal subunit.

The protein localises to the plastid. The protein resides in the chloroplast. Its function is as follows. One of the primary rRNA binding proteins, it binds directly to 16S rRNA where it nucleates assembly of the head domain of the 30S subunit. The protein is Small ribosomal subunit protein uS7cz/uS7cy (rps7-A) of Citrus sinensis (Sweet orange).